The following is a 396-amino-acid chain: L-lactate dehydrogenase (396 aa).

In terms of domain architecture, FMN hydroxy acid dehydrogenase spans 1–380 (MIISAASDYR…TQDSLVQVLG (380 aa)). Residue Tyr24 participates in substrate binding. The FMN site is built by Ser106 and Gln127. Tyr129 serves as a coordination point for substrate. Position 155 (Thr155) interacts with FMN. Substrate is bound at residue Arg164. Residue Lys251 coordinates FMN. Residue His275 is the Proton acceptor of the active site. Substrate is bound at residue Arg278. 306 to 330 (DSGIRNGLDVVRMIALGADTVLLGR) contacts FMN.

Belongs to the FMN-dependent alpha-hydroxy acid dehydrogenase family. The cofactor is FMN.

The protein resides in the cell inner membrane. The catalysed reaction is (S)-lactate + A = pyruvate + AH2. In terms of biological role, catalyzes the conversion of L-lactate to pyruvate. Is coupled to the respiratory chain. This Escherichia coli O45:K1 (strain S88 / ExPEC) protein is L-lactate dehydrogenase.